We begin with the raw amino-acid sequence, 373 residues long: Probable tRNA sulfurtransferase (373 aa).

The region spanning 54-158 is the THUMP domain; it reads NKNIEELSKV…NDVAYFYYKI (105 aa). ATP-binding positions include 176-177, 201-202, Lys256, Gly278, and Gln287; these read LF and NF.

This sequence belongs to the ThiI family.

It localises to the cytoplasm. It catalyses the reaction [ThiI sulfur-carrier protein]-S-sulfanyl-L-cysteine + a uridine in tRNA + 2 reduced [2Fe-2S]-[ferredoxin] + ATP + H(+) = [ThiI sulfur-carrier protein]-L-cysteine + a 4-thiouridine in tRNA + 2 oxidized [2Fe-2S]-[ferredoxin] + AMP + diphosphate. The enzyme catalyses [ThiS sulfur-carrier protein]-C-terminal Gly-Gly-AMP + S-sulfanyl-L-cysteinyl-[cysteine desulfurase] + AH2 = [ThiS sulfur-carrier protein]-C-terminal-Gly-aminoethanethioate + L-cysteinyl-[cysteine desulfurase] + A + AMP + 2 H(+). It participates in cofactor biosynthesis; thiamine diphosphate biosynthesis. In terms of biological role, catalyzes the ATP-dependent transfer of a sulfur to tRNA to produce 4-thiouridine in position 8 of tRNAs, which functions as a near-UV photosensor. Also catalyzes the transfer of sulfur to the sulfur carrier protein ThiS, forming ThiS-thiocarboxylate. This is a step in the synthesis of thiazole, in the thiamine biosynthesis pathway. The sulfur is donated as persulfide by IscS. In Saccharolobus islandicus (strain L.S.2.15 / Lassen #1) (Sulfolobus islandicus), this protein is Probable tRNA sulfurtransferase.